Reading from the N-terminus, the 301-residue chain is GTPase Era (301 aa).

An Era-type G domain is found at 7–175 (YCGFIAIVGR…AGIVRKHLPE (169 aa)). The G1 stretch occupies residues 15–22 (GRPNVGKS). GTP is bound at residue 15-22 (GRPNVGKS). The G2 stretch occupies residues 41–45 (QTTRH). Residues 62–65 (DTPG) are G3. Residues 62–66 (DTPGL) and 124–127 (NKVD) each bind GTP. The segment at 124 to 127 (NKVD) is G4. The tract at residues 154 to 156 (ISA) is G5. The 78-residue stretch at 206–283 (LGAELPYSVT…HLELWVKVKS (78 aa)) folds into the KH type-2 domain.

The protein belongs to the TRAFAC class TrmE-Era-EngA-EngB-Septin-like GTPase superfamily. Era GTPase family. As to quaternary structure, monomer.

It localises to the cytoplasm. The protein localises to the cell inner membrane. Its function is as follows. An essential GTPase that binds both GDP and GTP, with rapid nucleotide exchange. Plays a role in 16S rRNA processing and 30S ribosomal subunit biogenesis and possibly also in cell cycle regulation and energy metabolism. This chain is GTPase Era, found in Salmonella paratyphi B (strain ATCC BAA-1250 / SPB7).